Consider the following 258-residue polypeptide: NAD kinase (258 aa).

The Proton acceptor role is filled by aspartate 51. NAD(+) is bound by residues 51-52 (DG), lysine 56, 119-120 (ND), lysine 130, aspartate 149, 160-165 (TAYSLS), and alanine 184.

This sequence belongs to the NAD kinase family. A divalent metal cation serves as cofactor.

Its subcellular location is the cytoplasm. It carries out the reaction NAD(+) + ATP = ADP + NADP(+) + H(+). Its function is as follows. Involved in the regulation of the intracellular balance of NAD and NADP, and is a key enzyme in the biosynthesis of NADP. Catalyzes specifically the phosphorylation on 2'-hydroxyl of the adenosine moiety of NAD to yield NADP. The sequence is that of NAD kinase from Thermotoga petrophila (strain ATCC BAA-488 / DSM 13995 / JCM 10881 / RKU-1).